The primary structure comprises 442 residues: Glutamate--tRNA ligase 1 (442 aa).

A 'HIGH' region motif is present at residues 9 to 19 (PSPTGKLHVGN). A 'KMSKS' region motif is present at residues 240 to 244 (KLSKR). Lys243 is a binding site for ATP.

Belongs to the class-I aminoacyl-tRNA synthetase family. Glutamate--tRNA ligase type 1 subfamily. In terms of assembly, monomer.

It localises to the cytoplasm. It carries out the reaction tRNA(Glu) + L-glutamate + ATP = L-glutamyl-tRNA(Glu) + AMP + diphosphate. Catalyzes the attachment of glutamate to tRNA(Glu) in a two-step reaction: glutamate is first activated by ATP to form Glu-AMP and then transferred to the acceptor end of tRNA(Glu). In Novosphingobium aromaticivorans (strain ATCC 700278 / DSM 12444 / CCUG 56034 / CIP 105152 / NBRC 16084 / F199), this protein is Glutamate--tRNA ligase 1.